Reading from the N-terminus, the 199-residue chain is Holliday junction branch migration complex subunit RuvA (199 aa).

The segment at 1 to 64 (MIARLTGMLA…EDAISLFGFR (64 aa)) is domain I. Residues 65–143 (TVAEKEFFQV…KMDVAPSTKE (79 aa)) are domain II. Residues 144 to 154 (AAPSEAPPEVA) form a flexible linker region. Positions 154–199 (ADDVASALVNLGYKEAVVRKVLAEMAIESGASTEAVLRQALKILMK) are domain III.

This sequence belongs to the RuvA family. In terms of assembly, homotetramer. Forms an RuvA(8)-RuvB(12)-Holliday junction (HJ) complex. HJ DNA is sandwiched between 2 RuvA tetramers; dsDNA enters through RuvA and exits via RuvB. An RuvB hexamer assembles on each DNA strand where it exits the tetramer. Each RuvB hexamer is contacted by two RuvA subunits (via domain III) on 2 adjacent RuvB subunits; this complex drives branch migration. In the full resolvosome a probable DNA-RuvA(4)-RuvB(12)-RuvC(2) complex forms which resolves the HJ.

It localises to the cytoplasm. Its function is as follows. The RuvA-RuvB-RuvC complex processes Holliday junction (HJ) DNA during genetic recombination and DNA repair, while the RuvA-RuvB complex plays an important role in the rescue of blocked DNA replication forks via replication fork reversal (RFR). RuvA specifically binds to HJ cruciform DNA, conferring on it an open structure. The RuvB hexamer acts as an ATP-dependent pump, pulling dsDNA into and through the RuvAB complex. HJ branch migration allows RuvC to scan DNA until it finds its consensus sequence, where it cleaves and resolves the cruciform DNA. This Geobacter metallireducens (strain ATCC 53774 / DSM 7210 / GS-15) protein is Holliday junction branch migration complex subunit RuvA.